The sequence spans 903 residues: DNA mismatch repair protein MutS (903 aa).

Residues 1–89 (MPRSASQPPD…DEPAWGHHSQ (89 aa)) form a disordered region. Composition is skewed to low complexity over residues 20–36 (APEP…SEPE) and 49–62 (ADAA…QATA). 719–726 (GPNASGKS) lines the ATP pocket.

The protein belongs to the DNA mismatch repair MutS family.

This protein is involved in the repair of mismatches in DNA. It is possible that it carries out the mismatch recognition step. This protein has a weak ATPase activity. This is DNA mismatch repair protein MutS from Synechococcus sp. (strain CC9605).